Here is a 602-residue protein sequence, read N- to C-terminus: Glutamyl-tRNA(Gln) amidotransferase subunit B, mitochondrial (602 aa).

Belongs to the GatB/GatE family. GatB subfamily. Subunit of the heterotrimeric GatCAB amidotransferase (AdT) complex, composed of A, B and C subunits.

Its subcellular location is the mitochondrion. The catalysed reaction is L-glutamyl-tRNA(Gln) + L-glutamine + ATP + H2O = L-glutaminyl-tRNA(Gln) + L-glutamate + ADP + phosphate + H(+). Its function is as follows. Allows the formation of correctly charged Gln-tRNA(Gln) through the transamidation of misacylated Glu-tRNA(Gln) in the mitochondria. The reaction takes place in the presence of glutamine and ATP through an activated gamma-phospho-Glu-tRNA(Gln). The chain is Glutamyl-tRNA(Gln) amidotransferase subunit B, mitochondrial from Paracoccidioides lutzii (strain ATCC MYA-826 / Pb01) (Paracoccidioides brasiliensis).